A 440-amino-acid polypeptide reads, in one-letter code: 6-phospho-alpha-glucosidase (440 aa).

4–70 contacts NAD(+); that stretch reads FSVVIAGGGS…PEIEFSYTTD (67 aa). The substrate site is built by Arg-93 and Asn-147. Cys-169 is a Mn(2+) binding site. The Proton donor role is filled by Asp-170. Residue His-200 coordinates Mn(2+). Residue Tyr-263 is the Proton acceptor of the active site. Arg-283 is a binding site for substrate.

In terms of assembly, homodimer. It depends on NAD(+) as a cofactor. The cofactor is Mn(2+). Requires Co(2+) as cofactor. Ni(2+) is required as a cofactor.

It carries out the reaction alpha-maltose 6'-phosphate + H2O = D-glucose 6-phosphate + D-glucose. It functions in the pathway glycan biosynthesis; sucrose metabolism. Functionally, is involved in the catabolism of alpha-glycosides accumulated via a phosphoenolpyruvate-dependent phosphotransferase system (PEP-PTS). Hydrolyzes a wide variety of 6-phospho-alpha-D-glucosides including maltose-6'-phosphate, isomaltose-6'-phosphate, maltitol-6-phosphate, trehalose-6-phosphate and the 6'-phosphorylated derivatives of the five linkage-isomeric alpha-D-glucosyl-D-fructoses: trehalulose-6'-phosphate, turanose-6'-phosphate, maltulose-6'-phosphate, leucrose-6'-phosphate, and palatinose-6'-phosphate. However, sucrose-6-phosphate is not a substrate for this enzyme. This Klebsiella pneumoniae protein is 6-phospho-alpha-glucosidase.